The chain runs to 92 residues: Small ribosomal subunit protein uS19 (92 aa).

Belongs to the universal ribosomal protein uS19 family.

Protein S19 forms a complex with S13 that binds strongly to the 16S ribosomal RNA. The chain is Small ribosomal subunit protein uS19 from Clostridium botulinum (strain Eklund 17B / Type B).